Here is a 286-residue protein sequence, read N- to C-terminus: ATP synthase gamma chain (286 aa).

Belongs to the ATPase gamma chain family. In terms of assembly, F-type ATPases have 2 components, CF(1) - the catalytic core - and CF(0) - the membrane proton channel. CF(1) has five subunits: alpha(3), beta(3), gamma(1), delta(1), epsilon(1). CF(0) has three main subunits: a, b and c.

It localises to the cell inner membrane. Produces ATP from ADP in the presence of a proton gradient across the membrane. The gamma chain is believed to be important in regulating ATPase activity and the flow of protons through the CF(0) complex. The protein is ATP synthase gamma chain of Pseudoalteromonas atlantica (strain T6c / ATCC BAA-1087).